Consider the following 345-residue polypeptide: Anthranilate phosphoribosyltransferase (345 aa).

5-phospho-alpha-D-ribose 1-diphosphate contacts are provided by residues glycine 80, 83–84, threonine 88, 90–93, 108–116, and serine 120; these read GD, NIST, and KHGNRSVSS. Glycine 80 is a binding site for anthranilate. Residue serine 92 participates in Mg(2+) binding. Asparagine 111 is a binding site for anthranilate. Anthranilate is bound at residue arginine 166. 2 residues coordinate Mg(2+): aspartate 225 and glutamate 226.

It belongs to the anthranilate phosphoribosyltransferase family. Homodimer. Requires Mg(2+) as cofactor.

It catalyses the reaction N-(5-phospho-beta-D-ribosyl)anthranilate + diphosphate = 5-phospho-alpha-D-ribose 1-diphosphate + anthranilate. The protein operates within amino-acid biosynthesis; L-tryptophan biosynthesis; L-tryptophan from chorismate: step 2/5. Catalyzes the transfer of the phosphoribosyl group of 5-phosphorylribose-1-pyrophosphate (PRPP) to anthranilate to yield N-(5'-phosphoribosyl)-anthranilate (PRA). This Desulforamulus reducens (strain ATCC BAA-1160 / DSM 100696 / MI-1) (Desulfotomaculum reducens) protein is Anthranilate phosphoribosyltransferase.